The sequence spans 286 residues: 4-hydroxybenzoate octaprenyltransferase (286 aa).

The next 7 helical transmembrane spans lie at 20–40 (IGTLLLLWPCLMALLLAAGGM), 43–63 (LKVLTIFIFGVVVMRACGCII), 95–115 (ILFAVMGLFAFGLVLMLNPLV), 142–162 (FLGVVWSWSIPMAYAAQTGEV), 167–187 (WWLFAANWCWTVAYDTMYAMV), 210–230 (QIIGLFQLAALACFITAGWAA), and 234–254 (LVYGLGIITFVGFSMYQQKLI).

This sequence belongs to the UbiA prenyltransferase family. Mg(2+) serves as cofactor.

The protein resides in the cell inner membrane. It catalyses the reaction all-trans-octaprenyl diphosphate + 4-hydroxybenzoate = 4-hydroxy-3-(all-trans-octaprenyl)benzoate + diphosphate. The protein operates within cofactor biosynthesis; ubiquinone biosynthesis. Its function is as follows. Catalyzes the prenylation of para-hydroxybenzoate (PHB) with an all-trans polyprenyl group. Mediates the second step in the final reaction sequence of ubiquinone-8 (UQ-8) biosynthesis, which is the condensation of the polyisoprenoid side chain with PHB, generating the first membrane-bound Q intermediate 3-octaprenyl-4-hydroxybenzoate. The polypeptide is 4-hydroxybenzoate octaprenyltransferase (Shewanella sediminis (strain HAW-EB3)).